The chain runs to 50 residues: Large ribosomal subunit protein bL33B (50 aa).

Belongs to the bacterial ribosomal protein bL33 family.

In Streptococcus agalactiae serotype V (strain ATCC BAA-611 / 2603 V/R), this protein is Large ribosomal subunit protein bL33B.